The primary structure comprises 473 residues: Bifunctional protein HldE (473 aa).

Residues 1-318 form a ribokinase region; that stretch reads MKLTLPRYDQ…RAVQREEGSE (318 aa). 194 to 197 serves as a coordination point for ATP; the sequence is NLHE. Asp-263 is a catalytic residue. The segment at 343-473 is cytidylyltransferase; that stretch reads FTNGCFDILH…TAIVEKIRNK (131 aa).

This sequence in the N-terminal section; belongs to the carbohydrate kinase PfkB family. It in the C-terminal section; belongs to the cytidylyltransferase family. In terms of assembly, homodimer.

It catalyses the reaction D-glycero-beta-D-manno-heptose 7-phosphate + ATP = D-glycero-beta-D-manno-heptose 1,7-bisphosphate + ADP + H(+). The catalysed reaction is D-glycero-beta-D-manno-heptose 1-phosphate + ATP + H(+) = ADP-D-glycero-beta-D-manno-heptose + diphosphate. Its pathway is nucleotide-sugar biosynthesis; ADP-L-glycero-beta-D-manno-heptose biosynthesis; ADP-L-glycero-beta-D-manno-heptose from D-glycero-beta-D-manno-heptose 7-phosphate: step 1/4. The protein operates within nucleotide-sugar biosynthesis; ADP-L-glycero-beta-D-manno-heptose biosynthesis; ADP-L-glycero-beta-D-manno-heptose from D-glycero-beta-D-manno-heptose 7-phosphate: step 3/4. Functionally, catalyzes the phosphorylation of D-glycero-D-manno-heptose 7-phosphate at the C-1 position to selectively form D-glycero-beta-D-manno-heptose-1,7-bisphosphate. In terms of biological role, catalyzes the ADP transfer from ATP to D-glycero-beta-D-manno-heptose 1-phosphate, yielding ADP-D-glycero-beta-D-manno-heptose. The protein is Bifunctional protein HldE of Ectopseudomonas mendocina (strain ymp) (Pseudomonas mendocina).